Consider the following 311-residue polypeptide: tRNA-cytidine(32) 2-sulfurtransferase (311 aa).

Residues 47–52 carry the PP-loop motif motif; the sequence is SGGKDS. The [4Fe-4S] cluster site is built by Cys122, Cys125, and Cys213.

Belongs to the TtcA family. In terms of assembly, homodimer. It depends on Mg(2+) as a cofactor. The cofactor is [4Fe-4S] cluster.

Its subcellular location is the cytoplasm. The catalysed reaction is cytidine(32) in tRNA + S-sulfanyl-L-cysteinyl-[cysteine desulfurase] + AH2 + ATP = 2-thiocytidine(32) in tRNA + L-cysteinyl-[cysteine desulfurase] + A + AMP + diphosphate + H(+). It functions in the pathway tRNA modification. Catalyzes the ATP-dependent 2-thiolation of cytidine in position 32 of tRNA, to form 2-thiocytidine (s(2)C32). The sulfur atoms are provided by the cysteine/cysteine desulfurase (IscS) system. This is tRNA-cytidine(32) 2-sulfurtransferase from Salmonella paratyphi A (strain ATCC 9150 / SARB42).